Here is a 312-residue protein sequence, read N- to C-terminus: Olfactory receptor 1J21 (312 aa).

7 helical membrane-spanning segments follow: residues A29 to I49, P58 to A78, A95 to L115, L143 to F163, L197 to S217, C241 to F261, and V272 to L292.

It belongs to the G-protein coupled receptor 1 family.

It localises to the cell membrane. Odorant receptor. Activated by (+) and (-)-carvone. This Mus musculus (Mouse) protein is Olfactory receptor 1J21.